The chain runs to 310 residues: Small ribosomal subunit protein uS2 (310 aa).

Over residues Trp-249–Ala-272 the composition is skewed to basic and acidic residues. Residues Trp-249–Ala-310 are disordered. Positions Glu-273–Ala-310 are enriched in low complexity.

This sequence belongs to the universal ribosomal protein uS2 family.

This chain is Small ribosomal subunit protein uS2 (rpsB), found in Streptomyces coelicolor (strain ATCC BAA-471 / A3(2) / M145).